A 124-amino-acid polypeptide reads, in one-letter code: Ribonuclease pancreatic (124 aa).

Residues 1-13 (KETAAEKFQRQHM) are compositionally biased toward basic and acidic residues. The tract at residues 1–21 (KETAAEKFQRQHMDTSSSLSN) is disordered. Residues Lys-7 and Arg-10 each contribute to the substrate site. Residue His-12 is the Proton acceptor of the active site. 4 cysteine pairs are disulfide-bonded: Cys-26/Cys-84, Cys-40/Cys-95, Cys-58/Cys-110, and Cys-65/Cys-72. N-linked (GlcNAc...) asparagine glycosylation occurs at Asn-34. Substrate is bound by residues 41–45 (KPVNT), Lys-66, and Arg-85. The Proton donor role is filled by His-119.

The protein belongs to the pancreatic ribonuclease family. Monomer. Interacts with and forms tight 1:1 complexes with RNH1. Dimerization of two such complexes may occur. Interaction with RNH1 inhibits this protein. Pancreas.

Its subcellular location is the secreted. The catalysed reaction is an [RNA] containing cytidine + H2O = an [RNA]-3'-cytidine-3'-phosphate + a 5'-hydroxy-ribonucleotide-3'-[RNA].. It catalyses the reaction an [RNA] containing uridine + H2O = an [RNA]-3'-uridine-3'-phosphate + a 5'-hydroxy-ribonucleotide-3'-[RNA].. Its function is as follows. Endonuclease that catalyzes the cleavage of RNA on the 3' side of pyrimidine nucleotides. Acts on single-stranded and double-stranded RNA. In Hippopotamus amphibius (Hippopotamus), this protein is Ribonuclease pancreatic (RNASE1).